A 218-amino-acid chain; its full sequence is Cytidylate kinase (218 aa).

10-18 serves as a coordination point for ATP; sequence GPAGSGKST.

Belongs to the cytidylate kinase family. Type 1 subfamily.

It is found in the cytoplasm. It catalyses the reaction CMP + ATP = CDP + ADP. The catalysed reaction is dCMP + ATP = dCDP + ADP. The polypeptide is Cytidylate kinase (Fusobacterium nucleatum subsp. nucleatum (strain ATCC 25586 / DSM 15643 / BCRC 10681 / CIP 101130 / JCM 8532 / KCTC 2640 / LMG 13131 / VPI 4355)).